Consider the following 172-residue polypeptide: UPF0254 protein Mlab_1743 (172 aa).

The protein belongs to the UPF0254 family.

The protein is UPF0254 protein Mlab_1743 of Methanocorpusculum labreanum (strain ATCC 43576 / DSM 4855 / Z).